The following is a 517-amino-acid chain: Crotonobetaine/carnitine--CoA ligase (517 aa).

The protein belongs to the ATP-dependent AMP-binding enzyme family.

The enzyme catalyses 4-(trimethylamino)butanoate + ATP + CoA = 4-(trimethylamino)butanoyl-CoA + AMP + diphosphate. It carries out the reaction crotonobetaine + ATP + CoA = crotonobetainyl-CoA + AMP + diphosphate. The catalysed reaction is (R)-carnitine + ATP + CoA = (R)-carnitinyl-CoA + AMP + diphosphate. It participates in amine and polyamine metabolism; carnitine metabolism. In terms of biological role, catalyzes the transfer of CoA to carnitine, generating the initial carnitinyl-CoA needed for the CaiB reaction cycle. Also has activity toward crotonobetaine and gamma-butyrobetaine. The protein is Crotonobetaine/carnitine--CoA ligase of Salmonella typhi.